We begin with the raw amino-acid sequence, 547 residues long: Cdc42-interacting protein 4 (547 aa).

The segment at Met-1–Phe-117 is required for translocation to the plasma membrane in response to insulin, podosome formation and interaction with AKAP9 and microtubules. Positions Met-1 to Asp-264 constitute an F-BAR domain. Positions Phe-67–Val-259 form a coiled coil. Positions Arg-293–Glu-483 are interaction with CDC42. The interval Arg-293 to Asn-547 is interaction with PDE6G. A disordered region spans residues Val-294–Phe-323. Ser-296, Ser-298, and Ser-299 each carry phosphoserine. A coiled-coil region spans residues Thr-332 to Asp-425. An REM-1 domain is found at His-337–Glu-414. Residues Ala-415–Asn-547 form a required for interaction with FASLG and localization to lysosomes region. The interval Leu-420–Ala-485 is disordered. Ser-426 is subject to Phosphoserine. An interaction with DNM2 and WASL region spans residues Thr-431–Pro-487. Residues Pro-441–Ser-451 show a composition bias toward low complexity. The tract at residues Glu-476 to Asn-547 is interaction with DNM1 and WASL. Positions Pro-484–Asn-547 are required for podosome formation. An SH3 domain is found at Ser-486–Asn-547. Residues Gln-490 to Asn-547 form an interaction with WAS region. Residues Val-492–Asn-547 form an interaction with ARHGAP17, DAAM1, DIAPH1 and DIAPH2 region.

This sequence belongs to the FNBP1 family. As to quaternary structure, homodimerizes, the dimers can polymerize end-to-end to form filamentous structures. Interacts specifically with GTP-bound CDC42 and RHOQ. Interacts with AKAP9, ARHGAP17, DAAM1, DIAPH1, DIAPH2, DNM1, DNM2, FASLG/FASL, GAPVD1, LYN, microtubules, SRC, WAS/WASP and WASL/N-WASP. Interacts with the ligand binding domain of the thyroid receptor (TR) in the presence of thyroid hormone. May interact with CTNNB1 and HD/HTT. Interacts with PDE6G. In terms of tissue distribution, expressed in adrenal gland, aorta, brain, heart, kidney, liver, skeletal muscle and spleen.

It localises to the cytoplasm. Its subcellular location is the cytoskeleton. It is found in the cell cortex. The protein resides in the lysosome. The protein localises to the golgi apparatus. It localises to the cell membrane. Its subcellular location is the cell projection. It is found in the phagocytic cup. In terms of biological role, required to coordinate membrane tubulation with reorganization of the actin cytoskeleton during endocytosis. Also acts as a link between CDC42 signaling and regulation of the actin cytoskeleton. Binds to lipids such as phosphatidylinositol 4,5-bisphosphate and phosphatidylserine and promotes membrane invagination and the formation of tubules. Also enhances actin polymerization in the vicinity of membrane tubules by recruiting WASL/N-WASP which in turn activates the Arp2/3 complex. Actin polymerization and dynamin may promote the fission of membrane tubules to form endocytic vesicles. Required for the formation of podosomes, actin-rich adhesion structures specific to monocyte-derived cells. Required for translocation of GLUT4 to the plasma membrane in response to insulin signaling. May be required for the lysosomal retention of FASLG/FASL. This Rattus norvegicus (Rat) protein is Cdc42-interacting protein 4 (Trip10).